The sequence spans 128 residues: Phosphoribosyl-AMP cyclohydrolase (128 aa).

Asp77 is a binding site for Mg(2+). Cys78 provides a ligand contact to Zn(2+). Mg(2+)-binding residues include Asp79 and Asp81. 2 residues coordinate Zn(2+): Cys94 and Cys101.

The protein belongs to the PRA-CH family. In terms of assembly, homodimer. Requires Mg(2+) as cofactor. Zn(2+) is required as a cofactor.

It localises to the cytoplasm. The enzyme catalyses 1-(5-phospho-beta-D-ribosyl)-5'-AMP + H2O = 1-(5-phospho-beta-D-ribosyl)-5-[(5-phospho-beta-D-ribosylamino)methylideneamino]imidazole-4-carboxamide. It functions in the pathway amino-acid biosynthesis; L-histidine biosynthesis; L-histidine from 5-phospho-alpha-D-ribose 1-diphosphate: step 3/9. Catalyzes the hydrolysis of the adenine ring of phosphoribosyl-AMP. The protein is Phosphoribosyl-AMP cyclohydrolase of Granulibacter bethesdensis (strain ATCC BAA-1260 / CGDNIH1).